The sequence spans 567 residues: DNA ligase B (567 aa).

Lysine 132 (N6-AMP-lysine intermediate) is an active-site residue.

The protein belongs to the NAD-dependent DNA ligase family. LigB subfamily.

The catalysed reaction is NAD(+) + (deoxyribonucleotide)n-3'-hydroxyl + 5'-phospho-(deoxyribonucleotide)m = (deoxyribonucleotide)n+m + AMP + beta-nicotinamide D-nucleotide.. Catalyzes the formation of phosphodiester linkages between 5'-phosphoryl and 3'-hydroxyl groups in double-stranded DNA using NAD as a coenzyme and as the energy source for the reaction. This chain is DNA ligase B, found in Yersinia pseudotuberculosis serotype IB (strain PB1/+).